Here is a 344-residue protein sequence, read N- to C-terminus: Protein pelota homolog (344 aa).

This sequence belongs to the eukaryotic release factor 1 family. Pelota subfamily. As to quaternary structure, monomer. A divalent metal cation serves as cofactor.

The protein localises to the cytoplasm. In terms of biological role, may function in recognizing stalled ribosomes, interact with stem-loop structures in stalled mRNA molecules, and effect endonucleolytic cleavage of the mRNA. May play a role in the release non-functional ribosomes and degradation of damaged mRNAs. Has endoribonuclease activity. In Saccharolobus islandicus (strain Y.N.15.51 / Yellowstone #2) (Sulfolobus islandicus), this protein is Protein pelota homolog.